Consider the following 288-residue polypeptide: MNTIGLVVNSSKGDVAKPVREVISWLAEQRIKVLYNEESAVLLGCPEEGISTRELGAQCDCIMVWGGDGTLLNCARQTASSGTPIFGVNLGRLGFLTEIDIPDLRERLQALIAGHFYIEERMMLEATVIRGGQVVDQAVCLNDAVVSKGASFRMVQLRILVNNEFVGSFAADGVIVASPTGSTAYSLAAGGPIISPDMEAMLITPICPHSLSNRPIVISPQSKVEVQVLPYVDKVGLNLDGQYGLPLREGDRILINRATVKARFLKIQKTGFYDVLREKLKEWQNGLD.

Asp-68 serves as the catalytic Proton acceptor. Residues 68–69, 142–143, Arg-153, Asp-172, and Gln-242 contribute to the NAD(+) site; these read DG and ND.

This sequence belongs to the NAD kinase family. Requires a divalent metal cation as cofactor.

It is found in the cytoplasm. The enzyme catalyses NAD(+) + ATP = ADP + NADP(+) + H(+). Functionally, involved in the regulation of the intracellular balance of NAD and NADP, and is a key enzyme in the biosynthesis of NADP. Catalyzes specifically the phosphorylation on 2'-hydroxyl of the adenosine moiety of NAD to yield NADP. The chain is NAD kinase from Desulforamulus reducens (strain ATCC BAA-1160 / DSM 100696 / MI-1) (Desulfotomaculum reducens).